Here is a 422-residue protein sequence, read N- to C-terminus: Enolase (422 aa).

Position 162 (Gln162) interacts with (2R)-2-phosphoglycerate. The active-site Proton donor is Glu204. 3 residues coordinate Mg(2+): Asp241, Glu285, and Asp312. Residues Lys337, Arg366, Ser367, and Lys388 each coordinate (2R)-2-phosphoglycerate. Lys337 functions as the Proton acceptor in the catalytic mechanism.

The protein belongs to the enolase family. It depends on Mg(2+) as a cofactor.

The protein localises to the cytoplasm. Its subcellular location is the secreted. It localises to the cell surface. It catalyses the reaction (2R)-2-phosphoglycerate = phosphoenolpyruvate + H2O. It participates in carbohydrate degradation; glycolysis; pyruvate from D-glyceraldehyde 3-phosphate: step 4/5. In terms of biological role, catalyzes the reversible conversion of 2-phosphoglycerate (2-PG) into phosphoenolpyruvate (PEP). It is essential for the degradation of carbohydrates via glycolysis. This chain is Enolase, found in Wolinella succinogenes (strain ATCC 29543 / DSM 1740 / CCUG 13145 / JCM 31913 / LMG 7466 / NCTC 11488 / FDC 602W) (Vibrio succinogenes).